The following is a 183-amino-acid chain: Cell division protein ZapC (183 aa).

The protein belongs to the ZapC family. Interacts directly with FtsZ.

It localises to the cytoplasm. In terms of biological role, contributes to the efficiency of the cell division process by stabilizing the polymeric form of the cell division protein FtsZ. Acts by promoting interactions between FtsZ protofilaments and suppressing the GTPase activity of FtsZ. The polypeptide is Cell division protein ZapC (Xenorhabdus bovienii (strain SS-2004) (Xenorhabdus nematophila subsp. bovienii)).